We begin with the raw amino-acid sequence, 71 residues long: Protein CYSTEINE-RICH TRANSMEMBRANE MODULE 4 (71 aa).

The segment covering 1–12 (MSQYSQNQSSGA) has biased composition (polar residues). Residues 1-31 (MSQYSQNQSSGAYPTPPVSTGPYMTPPPLGY) are disordered. Positions 14-30 (PTPPVSTGPYMTPPPLG) are enriched in pro residues. A helical membrane pass occupies residues 48-64 (SKGDGFLKGCLAAMCCC).

This sequence belongs to the CYSTM1 family. As to quaternary structure, heterodimers. Interacts with CYSTM6, CYSTM7, CYSTM12 and WIH1/CYSTM13. Mostly expressed in roots, stems, rosette leaves and siliques and, to a lower extent, in flowers and cauline leaves.

Its subcellular location is the cell membrane. The protein resides in the cytoplasm. Involved in resistance to abiotic stress. This is Protein CYSTEINE-RICH TRANSMEMBRANE MODULE 4 from Arabidopsis thaliana (Mouse-ear cress).